Here is a 556-residue protein sequence, read N- to C-terminus: Single-strand DNA-binding protein (556 aa).

2 disordered regions span residues M1–E95 and F527–L556. Composition is skewed to polar residues over residues E10–F25 and V36–E51. Composition is skewed to basic and acidic residues over residues T52 to A73 and D539 to P548.

In terms of assembly, interacts with host VIP2 that promotes T-DNA integration into the host genome. Forms a complex made of virE2 and host proteins VIP1 and VBF. Forms heterodimers with the chaperone protein virE1 that prevent virE2 anarchic homopolymerization. Interacts with A.thaliana VIP1 that mediates its translocation to the host nucleus. Forms a complex made of VirE2, host VIP1 and VIP2 and single-stranded DNA (ssDNA).

Its subcellular location is the secreted. It localises to the host nucleus. Functionally, involved in DNA transformation; mediates the nuclear uptake of single-stranded DNA copies of the transferred DNA (T-DNA) element. Binds single-stranded but not double-stranded DNA regardless of nucleotide sequence composition. This chain is Single-strand DNA-binding protein (virE2), found in Agrobacterium fabrum (strain C58 / ATCC 33970) (Agrobacterium tumefaciens (strain C58)).